Consider the following 263-residue polypeptide: Retinoic acid early transcript 1E (263 aa).

Residues 1–30 (MRRISLTSSPVRLLLFLLLLLIALEIMVGG) form the signal peptide. The segment at 31–116 (HSLCFNFTIK…DIKPQIKTSD (86 aa)) is MHC class I alpha-1 like; down-regulates the cell surface expression of KLRK1. The Extracellular portion of the chain corresponds to 31–225 (HSLCFNFTIK…IHWSSSSLPD (195 aa)). 3 N-linked (GlcNAc...) asparagine glycosylation sites follow: asparagine 36, asparagine 154, and asparagine 212. The segment at 117–207 (PSTLQVEMFC…GHWEAMPEPT (91 aa)) is MHC class I alpha-2 like; down-regulates the cell surface expression of KLRK1. A disulfide bridge links cysteine 126 with cysteine 189. Residues 226-248 (RWIILGAFILLVLMGIVLICVWW) traverse the membrane as a helical segment. The Cytoplasmic segment spans residues 249 to 263 (QNGEWQAGLWPLRTS).

This sequence belongs to the MHC class I family. In terms of assembly, binds to KLRK1/NKG2D. As to quaternary structure, (Microbial infection) Contrary to other family members, does not interact with CMV glycoprotein UL16. In terms of tissue distribution, predominantly expressed in the skin, but also expressed in testis and trachea. Up-regulated in tumor cells of different origins. Expression progressively decreased after treatment of tumor cells with retinoic acid.

The protein localises to the membrane. It localises to the secreted. Its function is as follows. Binds and activates the KLRK1/NKG2D receptor, mediating natural killer cell cytotoxicity. The polypeptide is Retinoic acid early transcript 1E (Homo sapiens (Human)).